Consider the following 1070-residue polypeptide: MIRDGNEGMYTIPGFNQIQFEGFCRFINQGLMEELHKFPKIEDTDQEIEFQLFVETYQLVEPLIKERDAVYESLTYSSELYVPAGLIWKTSRAMQEQTIFIGNIPLMNSLGTSIINGIYRIVINQILQNPGVYYRSELDHNGISVYTSTIISDWGGRLELEIDRKARIWARVSRKQKISILVLLSAMGSNLREILDNVCYPEIFLSFPNDKEKKKIGSKENAILEFYQQFACVGGDPVFSESLCKELQKKFFQQRCELGRIGRRNTNQRLNLDIPQKNTFLLPRDVLAAADHLIRMKFGMGTLDDMNHLKNKRIRSVADLLQDQFGLALVRLENGVRGTICGAIRHKLIPNPKNLVTSTSFTTTYESFFGLHPLSQVLDRTNPLTQIAHGRRLSYLGPGGLTGRTASFRIRDIHPSHYGRICPIDTSEGINVGLIGSLAIHVRIGHWGSIESPFYEISERSKKAQMIYLSPSRDEYYMVAAGNSLALNRGIQEEQVVPARYRQEFLTIAWEQIHLRSIFPFQYFSIGASLIPFIEHNDANRALMSSNMQRQAVPLSRSEKCIVGTGLERQTALDSGVSAIAEREGKIIYTDTHKIIFSSNGDTMSIPLVMYQRSNKNTCMHQKPQVPRGKCIKKGQILADGATTVGGELALGKNVLVAHMPWEGYNSEDAVLISERLVYEDIYTSFYIRKYEIQTHVTSQGPERITKEIPHLEDHLLRNLDRNGIVMLGSWIETGDILVGKLTPQTATESSYAPEDRLLRAILGIQVSTAKETSLKLSIGGRGRVIDVRWIQKRGGSIYNPEMIRVYISQKREIKVGDKVAGRHGNKGIISKILPRQDMPYLQDGTPVDMVFNPLGVPSRMNVGQIFECSLGLAGDLLKRHYRIAPFDERYEQEASRKLVFSELYSASKQTKNPWVFEPEYPGKSRIFDGRTGDPFEQPVLIGKPYILKLIHQVDDKIHGRSSGHYALVTQQPLRGRAKQGGQRVGEMEVWALEGFGVAHILQEMLTYKSDHIRARQEVLGATIVGGTVPNPEDAPESFRLLVRELRSLALELNHFLVSEKNFQINRKEA.

It belongs to the RNA polymerase beta chain family. As to quaternary structure, in plastids the minimal PEP RNA polymerase catalytic core is composed of four subunits: alpha, beta, beta', and beta''. When a (nuclear-encoded) sigma factor is associated with the core the holoenzyme is formed, which can initiate transcription.

It is found in the plastid. It localises to the chloroplast. It catalyses the reaction RNA(n) + a ribonucleoside 5'-triphosphate = RNA(n+1) + diphosphate. DNA-dependent RNA polymerase catalyzes the transcription of DNA into RNA using the four ribonucleoside triphosphates as substrates. The polypeptide is DNA-directed RNA polymerase subunit beta (Dioscorea elephantipes (Elephant's foot yam)).